We begin with the raw amino-acid sequence, 1513 residues long: Lid2 complex component lid2 (1513 aa).

In terms of domain architecture, JmjN spans 56–97; it reads GLSVQLNASNMTDPFKFLLDNWHTIFKNGAIKLLPPEGWQIP. One can recognise an ARID domain in the interval 121–212; sequence YEKNYDYFKK…YIKPFERDSS (92 aa). The segment at 211-253 is disordered; that stretch reads SSPSFKSKRSESSTRKIRNTRSSAQQESPIPETSAQSPVQTIQ. Positions 230–253 are enriched in polar residues; sequence TRSSAQQESPIPETSAQSPVQTIQ. Residues 268–318 form a PHD-type 1 zinc finger; that stretch reads GEQCEYCGLDKNPETILLCDGCEAAYHTSCLDPPLTSIPKEDWYCDACKFN. Residues 408 to 574 form the JmjC domain; the sequence is KYSSEPWNLH…DGLLNSSISV (167 aa). A Phosphoserine modification is found at Ser722. A disordered region spans residues 1063–1086; the sequence is LSLNDRPGPPMEPASRETSPDSEG. Basic and acidic residues predominate over residues 1076-1086; that stretch reads ASRETSPDSEG. The segment at 1093–1145 adopts a PHD-type 2 zinc-finger fold; it reads KKGCIFCFCRLPESGVMIECEICHEWYHAKCLKMSKKKLRQDEKFTCPICDYR. The RING-type 1; degenerate zinc finger occupies 1096–1143; sequence CIFCFCRLPESGVMIECEICHEWYHAKCLKMSKKKLRQDEKFTCPICD. 2 disordered regions span residues 1244–1268 and 1280–1327; these read APNP…RQRQ and ASAI…NNKN. Residues 1257 to 1268 show a composition bias toward basic residues; it reads TRKPRPTKRQRQ. Positions 1301–1313 are enriched in basic and acidic residues; sequence VEAETKSKSEKSP. The span at 1316 to 1326 shows a compositional bias: polar residues; it reads NGTNISDANNK. Residues 1352-1403 form a PHD-type 3 zinc finger; sequence NSSCLCGEEFSPRDSFIDCTICERRFHYDCVGLNNEIADSVSKFTCPICMEQ. The RING-type 2; degenerate zinc finger occupies 1354–1401; that stretch reads SCLCGEEFSPRDSFIDCTICERRFHYDCVGLNNEIADSVSKFTCPICM.

Component of the Lid2 complex composed of ash2, jmj3, lid2, sdc1 and snt2.

The protein resides in the nucleus. This chain is Lid2 complex component lid2 (lid2), found in Schizosaccharomyces pombe (strain 972 / ATCC 24843) (Fission yeast).